The sequence spans 99 residues: uncharacterized protein (99 aa).

This is an uncharacterized protein from Haemophilus influenzae (strain ATCC 51907 / DSM 11121 / KW20 / Rd).